A 420-amino-acid polypeptide reads, in one-letter code: Glucose-1-phosphate adenylyltransferase (420 aa).

Alpha-D-glucose 1-phosphate-binding positions include tyrosine 107, glycine 173, 188-189 (EK), and serine 206.

This sequence belongs to the bacterial/plant glucose-1-phosphate adenylyltransferase family. As to quaternary structure, homotetramer.

It carries out the reaction alpha-D-glucose 1-phosphate + ATP + H(+) = ADP-alpha-D-glucose + diphosphate. The protein operates within glycan biosynthesis; glycogen biosynthesis. Involved in the biosynthesis of ADP-glucose, a building block required for the elongation reactions to produce glycogen. Catalyzes the reaction between ATP and alpha-D-glucose 1-phosphate (G1P) to produce pyrophosphate and ADP-Glc. The protein is Glucose-1-phosphate adenylyltransferase of Shewanella frigidimarina (strain NCIMB 400).